Here is a 364-residue protein sequence, read N- to C-terminus: UDP-N-acetylglucosamine--N-acetylmuramyl-(pentapeptide) pyrophosphoryl-undecaprenol N-acetylglucosamine transferase (364 aa).

UDP-N-acetyl-alpha-D-glucosamine contacts are provided by residues 10–12 (TGG), Asn-124, Ser-195, and Gln-295.

The protein belongs to the glycosyltransferase 28 family. MurG subfamily.

The protein resides in the cell membrane. It carries out the reaction di-trans,octa-cis-undecaprenyl diphospho-N-acetyl-alpha-D-muramoyl-L-alanyl-D-glutamyl-meso-2,6-diaminopimeloyl-D-alanyl-D-alanine + UDP-N-acetyl-alpha-D-glucosamine = di-trans,octa-cis-undecaprenyl diphospho-[N-acetyl-alpha-D-glucosaminyl-(1-&gt;4)]-N-acetyl-alpha-D-muramoyl-L-alanyl-D-glutamyl-meso-2,6-diaminopimeloyl-D-alanyl-D-alanine + UDP + H(+). Its pathway is cell wall biogenesis; peptidoglycan biosynthesis. In terms of biological role, cell wall formation. Catalyzes the transfer of a GlcNAc subunit on undecaprenyl-pyrophosphoryl-MurNAc-pentapeptide (lipid intermediate I) to form undecaprenyl-pyrophosphoryl-MurNAc-(pentapeptide)GlcNAc (lipid intermediate II). The protein is UDP-N-acetylglucosamine--N-acetylmuramyl-(pentapeptide) pyrophosphoryl-undecaprenol N-acetylglucosamine transferase of Bacillus pumilus (strain SAFR-032).